The primary structure comprises 424 residues: MKILYIVLDGAADSPTSPRKTLEEASKPNIDSLGSHAVCGMVYTVKPGVAPQSDYATLSLLGYNPDEYYPGRGPLEAFGAGIEMRRGDIALRANFATVDPGTLRIIDRRVGRSLTSREARELASAVDGMELEDGEGTALFRATIGHRGVLVLRHRSKPLSDAISNTDPAYERRGRFSVALEKYEPFIKLSNPLVEDEAAVLAARMLNEFTLKAVEILDSHPVNLAREKRGLLKANAILSRDAGGLPEEKPPSFQERFGLRGASIVEMVVERGISRYIGLDDIRVEIEGRAREEVYREEAARAVEALETHDLVYVHLKGPDEPGHDGSFEGKIRAVEDIDKHFFAPLLDRLSSAGLEPAFVVTSDHATPWDVGAHSGDPVPLMISHQSIQGSIGKFSETVCLRGRLGTIIGGYRIIPKTLSLLAG.

This sequence belongs to the BPG-independent phosphoglycerate mutase family. A-PGAM subfamily.

It catalyses the reaction (2R)-2-phosphoglycerate = (2R)-3-phosphoglycerate. The protein operates within carbohydrate degradation; glycolysis; pyruvate from D-glyceraldehyde 3-phosphate: step 3/5. In terms of biological role, catalyzes the interconversion of 2-phosphoglycerate and 3-phosphoglycerate. This is 2,3-bisphosphoglycerate-independent phosphoglycerate mutase from Aeropyrum pernix (strain ATCC 700893 / DSM 11879 / JCM 9820 / NBRC 100138 / K1).